The chain runs to 320 residues: Myoblast determination protein 1 (320 aa).

A Peptide (Met-Gly) (interchain with G-Cter in ubiquitin) cross-link involves residue Met1. The residue at position 104 (Lys104) is an N6-methyllysine; by EHMT2. Residues 109–160 form the bHLH domain; sequence DRRKAATMRERRRLSKVNEAFETLKRCTSSNPNQRLPKVEILRNAIRYIEGL. Disordered regions lie at residues 174 to 219 and 262 to 320; these read AAAA…PPSG and ESPA…YQVL. Polar residues-rich tracts occupy residues 197-207 and 291-301; these read SDASSPRSNCS and GESSGDPTQSP.

In terms of assembly, efficient DNA binding requires dimerization with another bHLH protein. Seems to form active heterodimers with ITF-2. Interacts with SUV39H1. Interacts with DDX5. Interacts with CHD2. Interacts with TSC22D3. Interacts with SETD3. Interacts with P-TEFB complex; promotes the transcriptional activity of MYOD1 through its CDK9-mediated phosphorylation. Interacts with CSRP3. Interacts with NUPR1. In terms of processing, phosphorylated by CDK9. This phosphorylation promotes its function in muscle differentiation. Post-translationally, acetylated by a complex containing EP300 and PCAF. The acetylation is essential to activate target genes. Conversely, its deacetylation by SIRT1 inhibits its function. Ubiquitinated on the N-terminus; which is required for proteasomal degradation. In terms of processing, methylation at Lys-104 by EHMT2/G9a inhibits myogenic activity.

It is found in the nucleus. Functionally, acts as a transcriptional activator that promotes transcription of muscle-specific target genes and plays a role in muscle differentiation. Together with MYF5 and MYOG, co-occupies muscle-specific gene promoter core region during myogenesis. Induces fibroblasts to differentiate into myoblasts. Interacts with and is inhibited by the twist protein. This interaction probably involves the basic domains of both proteins. The polypeptide is Myoblast determination protein 1 (MYOD1) (Homo sapiens (Human)).